The chain runs to 317 residues: Ribose-phosphate pyrophosphokinase (317 aa).

ATP is bound by residues 43–45 (DGE) and 102–103 (RQ). Mg(2+) contacts are provided by His-136 and Asp-175. The active site involves Lys-198. D-ribose 5-phosphate is bound by residues Arg-200, Asp-224, and 228-232 (DTAGT).

This sequence belongs to the ribose-phosphate pyrophosphokinase family. Class I subfamily. Homohexamer. Mg(2+) serves as cofactor.

The protein localises to the cytoplasm. The catalysed reaction is D-ribose 5-phosphate + ATP = 5-phospho-alpha-D-ribose 1-diphosphate + AMP + H(+). Its pathway is metabolic intermediate biosynthesis; 5-phospho-alpha-D-ribose 1-diphosphate biosynthesis; 5-phospho-alpha-D-ribose 1-diphosphate from D-ribose 5-phosphate (route I): step 1/1. Involved in the biosynthesis of the central metabolite phospho-alpha-D-ribosyl-1-pyrophosphate (PRPP) via the transfer of pyrophosphoryl group from ATP to 1-hydroxyl of ribose-5-phosphate (Rib-5-P). This chain is Ribose-phosphate pyrophosphokinase, found in Bacillus anthracis.